A 423-amino-acid chain; its full sequence is Myb-like protein G (423 aa).

An HTH myb-type domain is found at 36–90 (TISKQRENWTDEEHQKFLEALTLFDRDWKKIESFVGSKTVIQIRSHAQKYFIKVQ). The segment at residues 63-86 (WKKIESFVGSKTVIQIRSHAQKYF) is a DNA-binding region (H-T-H motif). 3 disordered regions span residues 93–116 (NTGE…QKQK), 177–205 (QQAV…GTTL), and 284–372 (ISPR…LGNY). A compositionally biased stretch (low complexity) spans 177–202 (QQAVTTAQSSQRNGGLPPNPSSNNGG). The span at 286 to 295 (PRNSTGNINV) shows a compositional bias: polar residues. The segment covering 302-354 (NNSNNNNNNNNNNNNNNNNNNNNNNNNNNNNNNNNNNNNNNNNNNNNNNNNNN) has biased composition (low complexity). A compositionally biased stretch (polar residues) spans 361–372 (QNHSNMVNLGNY).

Its subcellular location is the nucleus. The chain is Myb-like protein G (mybG) from Dictyostelium discoideum (Social amoeba).